The primary structure comprises 76 residues: ATP synthase subunit c (76 aa).

The next 2 helical transmembrane spans lie at 13–33 (LNVV…GILI) and 55–75 (FLGL…AFIF).

It belongs to the ATPase C chain family. As to quaternary structure, F-type ATPases have 2 components, F(1) - the catalytic core - and F(0) - the membrane proton channel. F(1) has five subunits: alpha(3), beta(3), gamma(1), delta(1), epsilon(1). F(0) has three main subunits: a(1), b(2) and c(10-14). The alpha and beta chains form an alternating ring which encloses part of the gamma chain. F(1) is attached to F(0) by a central stalk formed by the gamma and epsilon chains, while a peripheral stalk is formed by the delta and b chains.

It is found in the cell membrane. In terms of biological role, f(1)F(0) ATP synthase produces ATP from ADP in the presence of a proton or sodium gradient. F-type ATPases consist of two structural domains, F(1) containing the extramembraneous catalytic core and F(0) containing the membrane proton channel, linked together by a central stalk and a peripheral stalk. During catalysis, ATP synthesis in the catalytic domain of F(1) is coupled via a rotary mechanism of the central stalk subunits to proton translocation. Key component of the F(0) channel; it plays a direct role in translocation across the membrane. A homomeric c-ring of between 10-14 subunits forms the central stalk rotor element with the F(1) delta and epsilon subunits. The chain is ATP synthase subunit c from Bifidobacterium animalis subsp. lactis (strain AD011).